Reading from the N-terminus, the 359-residue chain is 3-dehydroquinate synthase (359 aa).

NAD(+) contacts are provided by residues 69-74, 103-107, 127-128, K140, and K149; these read DAEDGK, GAVTD, and TT. The Zn(2+) site is built by E182, H244, and H260.

It belongs to the sugar phosphate cyclases superfamily. Dehydroquinate synthase family. NAD(+) is required as a cofactor. Requires Co(2+) as cofactor. The cofactor is Zn(2+).

The protein resides in the cytoplasm. The catalysed reaction is 7-phospho-2-dehydro-3-deoxy-D-arabino-heptonate = 3-dehydroquinate + phosphate. It participates in metabolic intermediate biosynthesis; chorismate biosynthesis; chorismate from D-erythrose 4-phosphate and phosphoenolpyruvate: step 2/7. Functionally, catalyzes the conversion of 3-deoxy-D-arabino-heptulosonate 7-phosphate (DAHP) to dehydroquinate (DHQ). This Corynebacterium pseudotuberculosis (strain C231) protein is 3-dehydroquinate synthase.